The sequence spans 150 residues: Avidin-related protein 4/5 (150 aa).

Positions 1–24 (MVHTTSPLLLLLLLSLALVAPSLS) are cleaved as a signal peptide. The region spanning 26-147 (RKCSLTGKWT…GYNNFTRLCT (122 aa)) is the Avidin-like domain. A disulfide bridge connects residues cysteine 28 and cysteine 105. Residues asparagine 36, serine 40, tyrosine 57, threonine 59, and aspartate 63 each coordinate biotin. Asparagine 67 and asparagine 93 each carry an N-linked (GlcNAc...) asparagine glycan. Serine 95 and asparagine 140 together coordinate biotin. A glycan (N-linked (GlcNAc...) asparagine) is linked at asparagine 141.

The protein belongs to the avidin/streptavidin family. In terms of assembly, homotetramer.

It localises to the secreted. Functionally, forms a strong non-covalent specific complex with biotin. This Gallus gallus (Chicken) protein is Avidin-related protein 4/5 (AVR4).